Here is a 326-residue protein sequence, read N- to C-terminus: Adenosine receptor A1 (326 aa).

Residues 1–10 lie on the Extracellular side of the membrane; the sequence is MPPSISAFQA. A helical transmembrane segment spans residues 11–33; it reads AYIGIEVLIALVSVPGNVLVIWA. At 34–46 the chain is on the cytoplasmic side; sequence VKVNQALRDATFC. A helical membrane pass occupies residues 47 to 69; it reads FIVSLAVADVAVGALVIPLAILI. Residues 70–80 lie on the Extracellular side of the membrane; it reads NIGPRTYFHTC. The cysteines at positions 80 and 169 are disulfide-linked. A helical transmembrane segment spans residues 81 to 102; it reads LKVACPVLILTQSSILALLAIA. Over 103–123 the chain is Cytoplasmic; it reads VDRYLRVKIPLRYKTVVTPRR. Residues 124–146 form a helical membrane-spanning segment; that stretch reads AVVAITGCWILSFVVGLTPMFGW. The Extracellular segment spans residues 147-176; the sequence is NNLSAVERDWLANGSVGEPVIECQFEKVIS. 2 N-linked (GlcNAc...) asparagine glycosylation sites follow: Asn-148 and Asn-159. The helical transmembrane segment at 177–201 threads the bilayer; sequence MEYMVYFNFFVWVLPPLLLMVLIYM. Residues 202–235 lie on the Cytoplasmic side of the membrane; it reads EVFYLIRKQLNKKVSASSGDPQKYYGKELKIAKS. The helical transmembrane segment at 236-259 threads the bilayer; it reads LALILFLFALSWLPLHILNCITLF. Topologically, residues 260 to 267 are extracellular; it reads CPSCHMPR. Residues 268 to 292 traverse the membrane as a helical segment; sequence ILIYIAIFLSHGNSAMNPIVYAFRI. The Cytoplasmic segment spans residues 293–326; that stretch reads QKFRVTFLKIWNDHFRCQPAPPVDEDAPAERPDD. Residue Cys-309 is the site of S-palmitoyl cysteine attachment.

It belongs to the G-protein coupled receptor 1 family.

The protein localises to the cell membrane. Receptor for adenosine. The activity of this receptor is mediated by G proteins which inhibit adenylyl cyclase. The protein is Adenosine receptor A1 (ADORA1) of Bos taurus (Bovine).